The following is a 381-amino-acid chain: Estradiol 17-beta-dehydrogenase 2 (381 aa).

Residues 4–24 form a helical; Signal-anchor for type II membrane protein membrane-spanning segment; the sequence is FASESAWLCLAAAAVLGGTLL. 83–112 is an NAD(+) binding site; that stretch reads QKAVLVTGADSGFGHGLAKHLDKLGFTVFA. S220 is a substrate binding site. Catalysis depends on Y233, which acts as the Proton acceptor.

Belongs to the short-chain dehydrogenases/reductases (SDR) family. As to quaternary structure, homodimer.

It is found in the endoplasmic reticulum membrane. The catalysed reaction is 17beta-estradiol + NAD(+) = estrone + NADH + H(+). It carries out the reaction testosterone + NAD(+) = androst-4-ene-3,17-dione + NADH + H(+). The enzyme catalyses 17beta-hydroxy-5alpha-androstan-3-one + NAD(+) = 5alpha-androstan-3,17-dione + NADH + H(+). It catalyses the reaction (20S)-hydroxypregn-4-en-3-one + NAD(+) = progesterone + NADH + H(+). Catalyzes the NAD-dependent oxidation of highly active 17beta-hydroxysteroids, such as estradiol (E2), testosterone (T), and dihydrotestosterone (DHT), to their less active forms and thus regulates the biological potency of these steroids. Oxidizes estradiol to estrone, testosterone to androstenedione, and dihydrotestosterone to 5alpha-androstan-3,17-dione. Also has 20-alpha-HSD activity. This is Estradiol 17-beta-dehydrogenase 2 (Hsd17b2) from Mus musculus (Mouse).